The following is a 619-amino-acid chain: Eukaryotic translation initiation factor 2-alpha kinase 1 (619 aa).

The interval 1 to 40 is disordered; sequence MLGGSSVDGERDTDDDAAGAVAAPPAIDFPAEVSDPKYDE. The span at 18–28 shows a compositional bias: low complexity; sequence AGAVAAPPAID. The SIFI-degron signature appears at 85-104; the sequence is LHSKQVFKLLCQTFIKMGLL. Residues 167–580 form the Protein kinase domain; that stretch reads FEELAILGKG…ALQLLQSELF (414 aa). Residues 173–181 and lysine 196 contribute to the ATP site; that span reads LGKGGYGRV. Threonine 283 carries the post-translational modification Phosphothreonine. The stretch at 408–413 is one HRM 1 repeat; the sequence is ACPYVM. Aspartate 440 functions as the Proton acceptor in the catalytic mechanism. Threonine 483, threonine 485, and threonine 490 each carry phosphothreonine; by autocatalysis. One copy of the HRM 2 repeat lies at 549–554; that stretch reads RCPVQA.

The protein belongs to the protein kinase superfamily. Ser/Thr protein kinase family. GCN2 subfamily. As to quaternary structure, synthesized in an inactive form that binds to the N-terminal domain of CDC37. Has to be associated with a multiprotein complex containing Hsp90, CDC37 and PPP5C for maturation and activation by autophosphorylation. The phosphatase PPP5C modulates this activation. Homodimer; homodimerizes in presence of heme, forming a disulfide-linked inactive homodimer. Interacts with DELE1; binds both to full-length DELE1 and processed form of DELE1 (S-DELE1) in response to stress, leading to activate its protein kinase activity and trigger the integrated stress response (ISR). Activated by autophosphorylation; phosphorylated predominantly on serine and threonine residues, but also on tyrosine residues. Autophosphorylation at Thr-485 is required for kinase activation. The active autophosphorylated form apparently is largely refractory to cellular heme fluctuations. In terms of processing, ubiquitinated and degraded by the SIFI complex once the mitochondrial stress has been resolved, thereby providing stress response silencing. Within the SIFI complex, UBR4 initiates ubiquitin chain that are further elongated or branched by KCMF1. Expressed predominantly in erythroid cells, mature reticulocytes, as well as fetal liver nucleated erythroid cells. At much lower levels, expressed in hepatocytes and bone marrow-derived macrophages (at protein level).

The protein localises to the cytoplasm. The enzyme catalyses L-seryl-[protein] + ATP = O-phospho-L-seryl-[protein] + ADP + H(+). The catalysed reaction is L-threonyl-[protein] + ATP = O-phospho-L-threonyl-[protein] + ADP + H(+). Its activity is regulated as follows. In normal conditions, the protein kinase activity is inhibited; inhibition is relieved by various stress conditions. Inhibited by heme: in presence of heme, forms a disulfide-linked inactive homodimer. Heme depletion relieves inhibition and stimulates kinase activity by autophosphorylation. Inhibited by the heme metabolites biliverdin and bilirubin. Induced by oxidative stress generated by arsenite treatment. Binding of nitric oxide (NO) to the heme iron in the N-terminal heme-binding domain activates the kinase activity, while binding of carbon monoxide (CO) suppresses kinase activity. Protein kinase activity is also activated upon binding to DELE1 in response to various stress, triggering the integrated stress response (ISR): activated by full-length DELE1 in response to iron deficiency, while it is activated by the processed form of DELE1 (S-DELE1) in response to mitochondrial stress. Functionally, metabolic-stress sensing protein kinase that phosphorylates the alpha subunit of eukaryotic translation initiation factor 2 (EIF2S1/eIF-2-alpha) in response to various stress conditions. Key activator of the integrated stress response (ISR) required for adaptation to various stress, such as heme deficiency, oxidative stress, osmotic shock, mitochondrial dysfunction and heat shock. EIF2S1/eIF-2-alpha phosphorylation in response to stress converts EIF2S1/eIF-2-alpha in a global protein synthesis inhibitor, leading to a global attenuation of cap-dependent translation, while concomitantly initiating the preferential translation of ISR-specific mRNAs, such as the transcriptional activator ATF4, and hence allowing ATF4-mediated reprogramming. Acts as a key sensor of heme-deficiency: in normal conditions, binds hemin via a cysteine thiolate and histidine nitrogenous coordination, leading to inhibit the protein kinase activity. This binding occurs with moderate affinity, allowing it to sense the heme concentration within the cell: heme depletion relieves inhibition and stimulates kinase activity, activating the ISR. Thanks to this unique heme-sensing capacity, plays a crucial role to shut off protein synthesis during acute heme-deficient conditions. In red blood cells (RBCs), controls hemoglobin synthesis ensuring a coordinated regulation of the synthesis of its heme and globin moieties. It thereby plays an essential protective role for RBC survival in anemias of iron deficiency. Iron deficiency also triggers activation by full-length DELE1. Also activates the ISR in response to mitochondrial dysfunction: HRI/EIF2AK1 protein kinase activity is activated upon binding to the processed form of DELE1 (S-DELE1), thereby promoting the ATF4-mediated reprogramming. Also acts as an activator of mitophagy in response to mitochondrial damage: catalyzes phosphorylation of eIF-2-alpha (EIF2S1) following activation by S-DELE1, thereby promoting mitochondrial localization of EIF2S1, triggering PRKN-independent mitophagy. This is Eukaryotic translation initiation factor 2-alpha kinase 1 from Mus musculus (Mouse).